Here is a 189-residue protein sequence, read N- to C-terminus: Peptidyl-tRNA hydrolase (189 aa).

Tyrosine 14 serves as a coordination point for tRNA. Histidine 19 (proton acceptor) is an active-site residue. TRNA-binding residues include tyrosine 64, asparagine 66, and asparagine 112.

It belongs to the PTH family. As to quaternary structure, monomer.

The protein localises to the cytoplasm. It catalyses the reaction an N-acyl-L-alpha-aminoacyl-tRNA + H2O = an N-acyl-L-amino acid + a tRNA + H(+). Its function is as follows. Hydrolyzes ribosome-free peptidyl-tRNAs (with 1 or more amino acids incorporated), which drop off the ribosome during protein synthesis, or as a result of ribosome stalling. Catalyzes the release of premature peptidyl moieties from peptidyl-tRNA molecules trapped in stalled 50S ribosomal subunits, and thus maintains levels of free tRNAs and 50S ribosomes. This is Peptidyl-tRNA hydrolase from Clostridium botulinum (strain Kyoto / Type A2).